The following is a 240-amino-acid chain: Dephospho-CoA kinase domain-containing protein (240 aa).

In terms of domain architecture, DPCK spans 3 to 207 (LVGLTGGIAS…RSMEYLPLRL (205 aa)). Residue 8 to 15 (GGIASGKS) coordinates ATP.

The protein belongs to the CoaE family.

The sequence is that of Dephospho-CoA kinase domain-containing protein (Dcakd) from Rattus norvegicus (Rat).